We begin with the raw amino-acid sequence, 331 residues long: Cyclin-D1-binding protein 1 homolog (331 aa).

Positions 175 to 192 (QAQTDGEDPFSDIPEDDE) are enriched in acidic residues. A disordered region spans residues 175 to 197 (QAQTDGEDPFSDIPEDDEIGARG).

It belongs to the CCNDBP1 family.

The protein localises to the cytoplasm. It is found in the nucleus. May negatively regulate cell cycle progression. This chain is Cyclin-D1-binding protein 1 homolog (ccndbp1), found in Xenopus laevis (African clawed frog).